Here is a 260-residue protein sequence, read N- to C-terminus: ATP-dependent zinc metalloprotease FTSH, chloroplastic (260 aa).

A Zn(2+)-binding site is contributed by His-219. Residue Glu-220 is part of the active site. His-223 contributes to the Zn(2+) binding site.

It in the N-terminal section; belongs to the AAA ATPase family. The protein in the C-terminal section; belongs to the peptidase M41 family. The cofactor is Zn(2+).

Its subcellular location is the plastid. It localises to the chloroplast thylakoid membrane. Probable ATP-dependent zinc metallopeptidase. This chain is ATP-dependent zinc metalloprotease FTSH, chloroplastic, found in Helianthus annuus (Common sunflower).